Consider the following 225-residue polypeptide: Cytidylate kinase (225 aa).

11–19 provides a ligand contact to ATP; the sequence is GPSGAGKGT.

Belongs to the cytidylate kinase family. Type 1 subfamily.

The protein localises to the cytoplasm. It catalyses the reaction CMP + ATP = CDP + ADP. It carries out the reaction dCMP + ATP = dCDP + ADP. The polypeptide is Cytidylate kinase (Mannheimia succiniciproducens (strain KCTC 0769BP / MBEL55E)).